The chain runs to 646 residues: Lipoteichoic acid synthase (646 aa).

At 1-7 (MSSQKKK) the chain is on the cytoplasmic side. Residues 8-28 (ISLFAFFLLTVITITLKTYFS) form a helical membrane-spanning segment. Residues 29–43 (YYVDFSLGVKGLVQN) are Extracellular-facing. A helical transmembrane segment spans residues 44–64 (LILLMNPYSLVALVLSVFLFF). Over 65–68 (KGKK) the chain is Cytoplasmic. A helical transmembrane segment spans residues 69-89 (AFWFMFIGGFLLTFLLYANVV). Residues 90-119 (YFRFFSDFLTFSTLNQVGNVESMGGAVSAS) are Extracellular-facing. A helical membrane pass occupies residues 120 to 140 (FKWYDFVYFIDTLVYLFILIF). Topologically, residues 141 to 153 (KTKWLDTKAFSKK) are cytoplasmic. Residues 154–174 (FVPVVMAASVALFFLNLAFAE) form a helical membrane-spanning segment. The Extracellular portion of the chain corresponds to 175-646 (TDRPELLTRT…ETGPKANSKK (472 aa)). Mn(2+) is bound by residues Glu-255 and Thr-300. The active site involves Thr-300. His-416 contributes to the substrate binding site. Mn(2+) contacts are provided by Asp-475 and His-476. Residues 623 to 638 (NPDFKKVNPSKYKYET) are compositionally biased toward basic and acidic residues. Residues 623–646 (NPDFKKVNPSKYKYETGPKANSKK) are disordered.

This sequence belongs to the LTA synthase family. Post-translationally, proteolytically cleaved.

It localises to the cell membrane. Its subcellular location is the secreted. Its pathway is cell wall biogenesis; lipoteichoic acid biosynthesis. Its function is as follows. Catalyzes the polymerization of lipoteichoic acid (LTA) polyglycerol phosphate, a reaction that presumably uses phosphatidylglycerol (PG) as substrate. Is required for staphylococcal growth and cell division process. The protein is Lipoteichoic acid synthase (ltaS) of Staphylococcus aureus (strain bovine RF122 / ET3-1).